Here is a 71-residue protein sequence, read N- to C-terminus: Disintegrin ussuristatin-2 (71 aa).

One can recognise a Disintegrin domain in the interval 1 to 71 (EAGEECDCGA…QSADCPRNGF (71 aa)). Cystine bridges form between cysteine 6/cysteine 21, cysteine 8/cysteine 16, cysteine 15/cysteine 38, cysteine 29/cysteine 35, cysteine 34/cysteine 59, and cysteine 47/cysteine 66. The Cell attachment site; atypical (KGD) motif lies at 51–53 (KGD).

The protein belongs to the venom metalloproteinase (M12B) family. P-II subfamily. P-IId sub-subfamily. As to quaternary structure, homodimer. In terms of tissue distribution, expressed by the venom gland.

It localises to the secreted. Functionally, suppress platelet aggregation induced by ADP, collagen, thrombin, and epinephrine (IC(50)=170-330 nM). Also dose-dependently inhibits the adhesion of human melanoma cells to fibrinogen but not to fibronectin. The polypeptide is Disintegrin ussuristatin-2 (Gloydius ussuriensis (Ussuri mamushi)).